The primary structure comprises 319 residues: Protein sprouty homolog 1 (319 aa).

M1 bears the N-acetylmethionine mark. The disordered stretch occupies residues 54–157 (TEGPSVVKRP…HRSERAIRTQ (104 aa)). The segment covering 69–79 (PRQEKHERTHE) has biased composition (basic and acidic residues). A compositionally biased stretch (low complexity) spans 112 to 131 (SRSTSTGSAASSGSNSSASS). The SPR domain occupies 183–295 (QCGKCKCGEC…CYDWIHRPGC (113 aa)).

The protein belongs to the sprouty family. Forms heterodimers with SPRY2. Interacts with TESK1. Interacts with CAV1 (via C-terminus).

It localises to the cytoplasm. The protein resides in the membrane. In terms of biological role, inhibits fibroblast growth factor (FGF)-induced retinal lens fiber differentiation, probably by inhibiting FGF-mediated phosphorylation of ERK1/2. Inhibits TGFB-induced epithelial-to-mesenchymal transition in lens epithelial cells. This is Protein sprouty homolog 1 (SPRY1) from Bos taurus (Bovine).